The primary structure comprises 1492 residues: Putative leucine-rich repeat-containing protein DDB_G0290503 (1492 aa).

The 110-residue stretch at 2–111 folds into the PH domain; sequence SILLEGYLEK…WIEGIKDAIK (110 aa). LRR repeat units lie at residues 123–144, 180–204, 258–284, 329–351, 352–375, 389–413, 439–462, 519–543, 551–575, 579–603, 632–656, 728–752, 806–830, 831–855, 895–919, 927–951, 955–979, 1013–1036, 1044–1068, 1138–1164, and 1210–1232; these read LDGLIKTKDNDIIKLREKIKHL, IKSLTLQLSSKDESMKSLEKQVEKL, QESLNEIKDENNDLQSLIDTQKQQFEK, KNQFSTKLQLVNNEIQSLKSIVD, DKLKEIQLKDNQLTQLNQQHEIDN, ISKISNQLNEKDNKIQELSKQSIDK, LEKLNDINQLSNKLQDKENQILEI, INELQSNLNENQNKINELIENNQSS, LNQLSDKLQEKDEKLKSLESSIIER, IDQLQDNLNEKQDKINELVENNESS, LDELQSKLNEKQNEINQLIENNQSS, LKSLDSIIIENQEKLVQLTKSNQDS, LDELQSKLNEKQNEINELIENNQSS, INELQSKLNEKQNKINELVENNESS, LIQLSDQLQEKENQLKSFESSIIER, LNQLQSKLNEKQNEIDQITENNQSS, NEKLNEINEKDNKINELIQTNESL, FENLEQELEEKNNKILDLNSQIIDV, LQDLENELNLEKDTVNEKNDDINELKE, and NAHLKINEKDNEIHSLSKEGFNE. The tract at residues 1272 to 1292 is disordered; that stretch reads RSSSSSLHQQQQMISPDLSNS. Over residues 1274-1286 the composition is skewed to low complexity; the sequence is SSSSLHQQQQMIS. 2 LRR repeats span residues 1424–1444 and 1445–1468; these read SSEKLQSIQLEIDTIREKYFF and AIARSLKLQGAQMGWSMSRSIFDM.

This is Putative leucine-rich repeat-containing protein DDB_G0290503 from Dictyostelium discoideum (Social amoeba).